The chain runs to 180 residues: Adenine phosphoribosyltransferase (180 aa).

Alanine 2 carries the N-acetylalanine modification. 2 positions are modified to phosphoserine: serine 15 and serine 30. At tyrosine 60 the chain carries Phosphotyrosine. Serine 66 is modified (phosphoserine). At threonine 135 the chain carries Phosphothreonine.

It belongs to the purine/pyrimidine phosphoribosyltransferase family. Homodimer.

It localises to the cytoplasm. The catalysed reaction is AMP + diphosphate = 5-phospho-alpha-D-ribose 1-diphosphate + adenine. The protein operates within purine metabolism; AMP biosynthesis via salvage pathway; AMP from adenine: step 1/1. In terms of biological role, catalyzes a salvage reaction resulting in the formation of AMP, that is energically less costly than de novo synthesis. This is Adenine phosphoribosyltransferase from Bos taurus (Bovine).